Consider the following 298-residue polypeptide: MSEPVVDTAELSAEEKKRLLRERRQAKMSKGKATARLNDILSQGSSVKTSGVKSVLDQEKEATPSHDEDPEIQDITEITTPPPRTPPIGEDAPQDIDKIFQSMLQQQGQGADTAGDPFAQIMKMFNQVEGGDSPPSESATSTQDPAELKYRQELLEYNTYNQKLWKFRFLLVRVSVTLFNFFYHYINLSNFHASNYAYVRDLSSEKYPVRDFFTWFATTEVVLVAAYYSIFHSLGLFHAANQNSFVLKAMSMGSMVLPQLEHYKPLVARFLGYYELLGIVLGDLSLVIVLFGLLSFAN.

Residues 1–164 (MSEPVVDTAE…LEYNTYNQKL (164 aa)) are Cytoplasmic-facing. Residues 40 to 92 (ILSQGSSVKTSGVKSVLDQEKEATPSHDEDPEIQDITEITTPPPRTPPIGEDA) are disordered. The span at 42–55 (SQGSSVKTSGVKSV) shows a compositional bias: low complexity. The segment covering 56 to 67 (LDQEKEATPSHD) has biased composition (basic and acidic residues). A helical membrane pass occupies residues 165 to 185 (WKFRFLLVRVSVTLFNFFYHY). Topologically, residues 186 to 211 (INLSNFHASNYAYVRDLSSEKYPVRD) are lumenal. Residues 212-231 (FFTWFATTEVVLVAAYYSIF) traverse the membrane as a helical segment. Residues 232–275 (HSLGLFHAANQNSFVLKAMSMGSMVLPQLEHYKPLVARFLGYYE) lie on the Cytoplasmic side of the membrane. The chain crosses the membrane as a helical span at residues 276–296 (LLGIVLGDLSLVIVLFGLLSF). The Lumenal segment spans residues 297–298 (AN).

This sequence belongs to the GET2 family. Component of the Golgi to ER traffic (GET) complex, which is composed of GET1, GET2 and GET3. Within the complex, GET1 and GET2 form a heterotetramer which is stabilized by phosphatidylinositol binding and which binds to the GET3 homodimer.

It is found in the endoplasmic reticulum membrane. Its subcellular location is the golgi apparatus membrane. Functionally, required for the post-translational delivery of tail-anchored (TA) proteins to the endoplasmic reticulum. Together with GET1, acts as a membrane receptor for soluble GET3, which recognizes and selectively binds the transmembrane domain of TA proteins in the cytosol. The GET complex cooperates with the HDEL receptor ERD2 to mediate the ATP-dependent retrieval of resident ER proteins that contain a C-terminal H-D-E-L retention signal from the Golgi to the ER. The chain is Golgi to ER traffic protein 2 from Candida albicans (strain SC5314 / ATCC MYA-2876) (Yeast).